The following is a 604-amino-acid chain: Glutamine--fructose-6-phosphate aminotransferase [isomerizing] (604 aa).

The active-site Nucleophile; for GATase activity is the cysteine 2. The Glutamine amidotransferase type-2 domain maps to 2–218; sequence CGIVGVVGNR…DKELVVLTKD (217 aa). SIS domains lie at 284 to 423 and 456 to 594; these read IVKS…ANGK and VANL…VDKP. The For Fru-6P isomerization activity role is filled by lysine 599.

Homodimer.

It localises to the cytoplasm. The enzyme catalyses D-fructose 6-phosphate + L-glutamine = D-glucosamine 6-phosphate + L-glutamate. Catalyzes the first step in hexosamine metabolism, converting fructose-6P into glucosamine-6P using glutamine as a nitrogen source. The protein is Glutamine--fructose-6-phosphate aminotransferase [isomerizing] of Streptococcus mutans serotype c (strain ATCC 700610 / UA159).